The primary structure comprises 213 residues: Uridine kinase (213 aa).

15-22 (GASASGKS) lines the ATP pocket.

This sequence belongs to the uridine kinase family.

It localises to the cytoplasm. The enzyme catalyses uridine + ATP = UMP + ADP + H(+). The catalysed reaction is cytidine + ATP = CMP + ADP + H(+). The protein operates within pyrimidine metabolism; CTP biosynthesis via salvage pathway; CTP from cytidine: step 1/3. It functions in the pathway pyrimidine metabolism; UMP biosynthesis via salvage pathway; UMP from uridine: step 1/1. This chain is Uridine kinase, found in Yersinia enterocolitica serotype O:8 / biotype 1B (strain NCTC 13174 / 8081).